A 287-amino-acid polypeptide reads, in one-letter code: Eukaryotic translation initiation factor 3 subunit G (287 aa).

The tract at residues 163–207 (EEDLESKEKDTKLGPTVPGSGKYVAPGMRGDRPAVTGGAERRSEE) is disordered. The RRM domain maps to 208 to 286 (NTCRVTNLPE…LVLKVEWTRF (79 aa)).

This sequence belongs to the eIF-3 subunit G family. As to quaternary structure, component of the eukaryotic translation initiation factor 3 (eIF-3) complex.

The protein localises to the cytoplasm. Functionally, RNA-binding component of the eukaryotic translation initiation factor 3 (eIF-3) complex, which is involved in protein synthesis of a specialized repertoire of mRNAs and, together with other initiation factors, stimulates binding of mRNA and methionyl-tRNAi to the 40S ribosome. The eIF-3 complex specifically targets and initiates translation of a subset of mRNAs involved in cell proliferation. This subunit can bind 18S rRNA. This chain is Eukaryotic translation initiation factor 3 subunit G, found in Brugia malayi (Filarial nematode worm).